The sequence spans 249 residues: 4-hydroxy-tetrahydrodipicolinate reductase (249 aa).

Residues 8-13 (GVTGQM), 87-89 (GTT), and 111-114 (ATNF) each bind NAD(+). Residue H143 is the Proton donor/acceptor of the active site. H144 contributes to the (S)-2,3,4,5-tetrahydrodipicolinate binding site. K147 serves as the catalytic Proton donor. 153–154 (GT) is a binding site for (S)-2,3,4,5-tetrahydrodipicolinate.

Belongs to the DapB family.

It localises to the cytoplasm. The enzyme catalyses (S)-2,3,4,5-tetrahydrodipicolinate + NAD(+) + H2O = (2S,4S)-4-hydroxy-2,3,4,5-tetrahydrodipicolinate + NADH + H(+). The catalysed reaction is (S)-2,3,4,5-tetrahydrodipicolinate + NADP(+) + H2O = (2S,4S)-4-hydroxy-2,3,4,5-tetrahydrodipicolinate + NADPH + H(+). It functions in the pathway amino-acid biosynthesis; L-lysine biosynthesis via DAP pathway; (S)-tetrahydrodipicolinate from L-aspartate: step 4/4. Functionally, catalyzes the conversion of 4-hydroxy-tetrahydrodipicolinate (HTPA) to tetrahydrodipicolinate. The sequence is that of 4-hydroxy-tetrahydrodipicolinate reductase from Haloarcula marismortui (strain ATCC 43049 / DSM 3752 / JCM 8966 / VKM B-1809) (Halobacterium marismortui).